Here is a 715-residue protein sequence, read N- to C-terminus: Serine/arginine repetitive matrix protein 5 (715 aa).

Residues 1–13 (MSSPKRSSKPSMS) show a composition bias toward low complexity. The disordered stretch occupies residues 1–715 (MSSPKRSSKP…RSSSSSSKLA (715 aa)). Polar residues predominate over residues 32–59 (LKSTKSATPNRSLVPTKPATSRNSVMSP). Residues 60–79 (SSSKSTKSTSTKRAPSNRPS) show a composition bias toward low complexity. Residues 80-90 (SRSRVRSKART) show a composition bias toward basic residues. Positions 92–104 (SRVSTDTRTSKAS) are enriched in polar residues. Residues 112–136 (HQRRGTHSRGRTPGRRGSRSSKRSP) are compositionally biased toward basic residues. Polar residues-rich tracts occupy residues 213–224 (TPSTAKCQTPTG) and 257–272 (YSPTEMSSRVKSYNQA). Low complexity predominate over residues 273-285 (STRSRPQSHSQSR). The span at 286–320 (SPRRSRSGSQKRTHSRVRSHSWKRNHSRARSRTRK) shows a compositional bias: basic residues. Basic and acidic residues-rich tracts occupy residues 359-388 (PSKERSHSHSRSSSKERDHRGSSSPRKESG) and 397-521 (KQRD…ERDH). The segment covering 522–536 (RRSRSPSKERQRRQS) has biased composition (basic residues). Composition is skewed to basic and acidic residues over residues 539–595 (PNKE…DHSR) and 611–628 (SSKEKAHSRSRTPSKEGN). The span at 657–666 (TRTSSLSQNR) shows a compositional bias: polar residues. Over residues 667–681 (TPSKTSSHSPSTFPS) the composition is skewed to low complexity. A compositionally biased stretch (polar residues) spans 682 to 715 (GGQTLSQDDSQADATTSKATLPGERSSSSSSKLA).

In Homo sapiens (Human), this protein is Serine/arginine repetitive matrix protein 5 (SRRM5).